Reading from the N-terminus, the 232-residue chain is Phosphoribosylformylglycinamidine synthase subunit PurQ (232 aa).

The Glutamine amidotransferase type-1 domain maps to K2–F232. Catalysis depends on C86, which acts as the Nucleophile. Residues H203 and E205 contribute to the active site.

In terms of assembly, part of the FGAM synthase complex composed of 1 PurL, 1 PurQ and 2 PurS subunits.

It localises to the cytoplasm. The enzyme catalyses N(2)-formyl-N(1)-(5-phospho-beta-D-ribosyl)glycinamide + L-glutamine + ATP + H2O = 2-formamido-N(1)-(5-O-phospho-beta-D-ribosyl)acetamidine + L-glutamate + ADP + phosphate + H(+). The catalysed reaction is L-glutamine + H2O = L-glutamate + NH4(+). The protein operates within purine metabolism; IMP biosynthesis via de novo pathway; 5-amino-1-(5-phospho-D-ribosyl)imidazole from N(2)-formyl-N(1)-(5-phospho-D-ribosyl)glycinamide: step 1/2. Its function is as follows. Part of the phosphoribosylformylglycinamidine synthase complex involved in the purines biosynthetic pathway. Catalyzes the ATP-dependent conversion of formylglycinamide ribonucleotide (FGAR) and glutamine to yield formylglycinamidine ribonucleotide (FGAM) and glutamate. The FGAM synthase complex is composed of three subunits. PurQ produces an ammonia molecule by converting glutamine to glutamate. PurL transfers the ammonia molecule to FGAR to form FGAM in an ATP-dependent manner. PurS interacts with PurQ and PurL and is thought to assist in the transfer of the ammonia molecule from PurQ to PurL. This Methanosarcina barkeri (strain Fusaro / DSM 804) protein is Phosphoribosylformylglycinamidine synthase subunit PurQ.